The chain runs to 387 residues: 4-hydroxy-3-methylbut-2-en-1-yl diphosphate synthase (flavodoxin) (387 aa).

Positions 293, 296, 328, and 335 each coordinate [4Fe-4S] cluster.

The protein belongs to the IspG family. The cofactor is [4Fe-4S] cluster.

It catalyses the reaction (2E)-4-hydroxy-3-methylbut-2-enyl diphosphate + oxidized [flavodoxin] + H2O + 2 H(+) = 2-C-methyl-D-erythritol 2,4-cyclic diphosphate + reduced [flavodoxin]. It functions in the pathway isoprenoid biosynthesis; isopentenyl diphosphate biosynthesis via DXP pathway; isopentenyl diphosphate from 1-deoxy-D-xylulose 5-phosphate: step 5/6. Converts 2C-methyl-D-erythritol 2,4-cyclodiphosphate (ME-2,4cPP) into 1-hydroxy-2-methyl-2-(E)-butenyl 4-diphosphate. The protein is 4-hydroxy-3-methylbut-2-en-1-yl diphosphate synthase (flavodoxin) of Treponema denticola (strain ATCC 35405 / DSM 14222 / CIP 103919 / JCM 8153 / KCTC 15104).